The chain runs to 618 residues: uncharacterized protein (618 aa).

The zn(2)-C6 fungal-type DNA-binding region spans 18–47 (SCQRCRQRKIKCDRLHPCFQCVKSNSQCFY). Position 598 is a phosphoserine (S598).

The protein localises to the nucleus. This is an uncharacterized protein from Schizosaccharomyces pombe (strain 972 / ATCC 24843) (Fission yeast).